We begin with the raw amino-acid sequence, 492 residues long: Catalase isozyme 2 (492 aa).

Active-site residues include His-65 and Asn-138. Tyr-348 serves as a coordination point for heme.

Belongs to the catalase family. Homotetramer. Requires heme as cofactor.

The protein localises to the peroxisome. It carries out the reaction 2 H2O2 = O2 + 2 H2O. Functionally, occurs in almost all aerobically respiring organisms and serves to protect cells from the toxic effects of hydrogen peroxide. The sequence is that of Catalase isozyme 2 (CAT2) from Solanum lycopersicum (Tomato).